Consider the following 146-residue polypeptide: Hemoglobin subunit beta-2 (146 aa).

Residues 2 to 146 form the Globin domain; that stretch reads EWTDFERATI…VVSSLGRQYH (145 aa). Heme b-binding residues include H63 and H92.

Belongs to the globin family. Hb2 is a heterotetramer of two alpha chains and two beta-2 chains. As to expression, red blood cells.

Functionally, involved in oxygen transport from gills to the various peripheral tissues. The protein is Hemoglobin subunit beta-2 (hbb2) of Pseudaphritis urvillii (Congolli).